Consider the following 406-residue polypeptide: Elongation factor Tu, chloroplastic (406 aa).

One can recognise a tr-type G domain in the interval 8-210 (KTHINIATIG…LLDSYIPKPK (203 aa)). Residues 17–24 (GHFNHGKT), 77–81 (DCPGH), and 132–135 (NKED) each bind GTP. Threonine 24 serves as a coordination point for Mg(2+).

The protein belongs to the TRAFAC class translation factor GTPase superfamily. Classic translation factor GTPase family. EF-Tu/EF-1A subfamily. In terms of assembly, monomer.

It localises to the plastid. Its subcellular location is the chloroplast. It catalyses the reaction GTP + H2O = GDP + phosphate + H(+). Functionally, GTP hydrolase that promotes the GTP-dependent binding of aminoacyl-tRNA to the A-site of ribosomes during protein biosynthesis. This is Elongation factor Tu, chloroplastic (tufA) from Chaetosphaeridium globosum (Charophycean green alga).